A 444-amino-acid chain; its full sequence is Jacalin-related lectin 42 (444 aa).

Alanine 2 carries the post-translational modification N-acetylalanine. Jacalin-type lectin domains follow at residues 2–143 (ALMV…YYIR), 146–289 (ATKS…YYAP), and 297–441 (TEKL…HVIP).

Belongs to the jacalin lectin family.

The chain is Jacalin-related lectin 42 (JAL42) from Arabidopsis thaliana (Mouse-ear cress).